The sequence spans 198 residues: Cyclin-dependent kinase inhibitor 1B (198 aa).

Over residues 1–11 (MSNVRVSNGSP) the composition is skewed to polar residues. The interval 1–34 (MSNVRVSNGSPSLERMDARQAEHPKPSACRNLFG) is disordered. Phosphoserine; by UHMK1 is present on serine 10. Residues 14 to 25 (ERMDARQAEHPK) are compositionally biased toward basic and acidic residues. Residues 51–91 (DMEEASQRKWNFDFQNHNPLEGRYQWQEVDKGSLPEFYYRP) form an interaction with CDK2 region. Tyrosine 74 is subject to Phosphotyrosine; by SRC. The tract at residues 85–198 (PEFYYRPPRP…KKPGLRRHQT (114 aa)) is disordered. Tyrosine 88 is subject to Phosphotyrosine; by ABL, LYN and SRC. The residue at position 89 (tyrosine 89) is a Phosphotyrosine. Residues 104–124 (QESQDVSGSRQAVPSIGSQAY) are compositionally biased toward polar residues. Positions 153–169 (KRPAADDSSSQNKRANR) match the Nuclear localization signal motif. Threonine 170 is subject to Phosphothreonine. Over residues 175-186 (SDGSLNAGSVEQ) the composition is skewed to polar residues. Threonine 187 is modified (phosphothreonine; by PKB/AKT1, CDK1 and CDK2). Threonine 198 bears the Phosphothreonine; by CaMK1, PKB/AKT1, RPS6KA1, RPS6KA3 and PIM1 mark.

The protein belongs to the CDI family. As to quaternary structure, forms a ternary complex composed of CCNE1, CDK2 and CDKN1B. Interacts directly with CCNE1; the interaction is inhibited by CDK2-dependent phosphorylation on Thr-187. Interacts with COPS5, subunit of the COP9 signalosome complex; the interaction leads to CDKN1B degradation. Interacts with NUP50; the interaction leads to nuclear import and degradation of phosphorylated CDKN1B. Interacts with CCND1 and SNX6. Interacts (Thr-198-phosphorylated form) with 14-3-3 proteins, binds strongly YWHAQ, weakly YWHAE and YWHAH, but not YWHAB nor YWHAZ; the interaction with YWHAQ results in translocation to the cytoplasm. Interacts with AKT1 and LYN; the interactions lead to cytoplasmic mislocation, phosphorylation of CDKN1B and inhibition of cell cycle arrest. Forms a ternary complex with CCNA2 and CDK2; CDKN1B inhibits the kinase activity of CDK2 through conformational rearrangements. Interacts (unphosphorylated form) with CDK2. Forms a complex with CDK2 and SPDYA, but does not directly interact with SPDYA. Forms a ternary complex composed of cyclin D, CDK4 and CDKN1B. Interacts (phosphorylated on Tyr-88 and Tyr-89) with CDK4; the interaction is required for cyclin D and CDK4 complex assembly, induces nuclear translocation and activates the CDK4 kinase activity. Interacts with GRB2. Interacts with PIM1. Identified in a complex with SKP1, SKP2 and CKS1B. Interacts with UHMK1; the interaction leads to cytoplasmic mislocation, phosphorylation of CDKN1B and inhibition of cell cycle arrest. Also interacts with CDK1. Dephosphorylated on Thr-187 by PPM1H, leading to CDKN1B stability. Post-translationally, phosphorylated; phosphorylation occurs on serine, threonine and tyrosine residues. Phosphorylation on Ser-10 is the major site of phosphorylation in resting cells, takes place at the G(0)-G(1) phase and leads to protein stability. Phosphorylation on other sites is greatly enhanced by mitogens, growth factors, cMYC and in certain cancer cell lines. The phosphorylated form found in the cytoplasm is inactivate. Phosphorylation on Thr-198 is required for interaction with 14-3-3 proteins. Phosphorylation on Thr-187, by CDK1 and CDK2 leads to protein ubiquitination and proteasomal degradation. Tyrosine phosphorylation promotes this process. Phosphorylation by PKB/AKT1 can be suppressed by LY294002, an inhibitor of the catalytic subunit of PI3K. Phosphorylation on Tyr-88 and Tyr-89 has no effect on binding CDK2, but is required for binding CDK4. Dephosphorylated on tyrosine residues by G-CSF. Dephosphorylated on Thr-187 by PPM1H, leading to CDKN1B stability. Ubiquitinated; in the cytoplasm by the KPC complex (composed of RNF123/KPC1 and UBAC1/KPC2) and, in the nucleus, by SCF(SKP2). The latter requires prior phosphorylation on Thr-187. Ubiquitinated; by a TRIM21-containing SCF(SKP2)-like complex; leads to its degradation. In terms of processing, subject to degradation in the lysosome. Interaction with SNX6 promotes lysosomal degradation.

It is found in the nucleus. The protein resides in the cytoplasm. The protein localises to the endosome. Functionally, important regulator of cell cycle progression. Inhibits the kinase activity of CDK2 bound to cyclin A, but has little inhibitory activity on CDK2 bound to SPDYA. Involved in G1 arrest. Potent inhibitor of cyclin E- and cyclin A-CDK2 complexes. Forms a complex with cyclin type D-CDK4 complexes and is involved in the assembly, stability, and modulation of CCND1-CDK4 complex activation. Acts either as an inhibitor or an activator of cyclin type D-CDK4 complexes depending on its phosphorylation state and/or stoichometry. In Cricetulus griseus (Chinese hamster), this protein is Cyclin-dependent kinase inhibitor 1B (CDKN1B).